Reading from the N-terminus, the 285-residue chain is Mitochondrial substrate carrier family protein L (285 aa).

Residues 1-13 lie on the Mitochondrial intermembrane side of the membrane; it reads MIASKETKEKIRN. Solcar repeat units lie at residues 8–94, 103–185, and 193–282; these read KEKI…VKSK, ISLG…AQRY, and MTMG…VMKF. The chain crosses the membrane as a helical span at residues 14 to 34; it reads FIGGFASGAASTLAGHPFDTL. The Mitochondrial matrix portion of the chain corresponds to 35-69; sequence KVRLQTEGSTGRFRGLAHCFTTTIKEEGFFALYKG. A helical membrane pass occupies residues 70–90; sequence VTPPLLGMSIINSCMFGAMNI. Residues 91 to 102 are Mitochondrial intermembrane-facing; it reads VKSKIHTDKSTP. The chain crosses the membrane as a helical span at residues 103-123; sequence ISLGEIMVSGAITGWIVSFVA. The Mitochondrial matrix portion of the chain corresponds to 124–156; the sequence is CPIETVKSKLQVQYTGVKLYNGPIDCIKKIGIR. A helical membrane pass occupies residues 157–177; sequence GLYKALIPTGFQRNSLYAYFG. The Mitochondrial intermembrane portion of the chain corresponds to 178–198; it reads CYELAQRYLRREDGSMTMGRS. The chain crosses the membrane as a helical span at residues 199–219; sequence FIAGGIAGTGFWLTNFPFDVI. Topologically, residues 220 to 256 are mitochondrial matrix; sequence RSRIMTMPYNESPPRYKGMIDCAKHIYRVDGLKGFWK. Residues 257–277 traverse the membrane as a helical segment; that stretch reads GFSPCLLRTFPANGATFVAYE. The Mitochondrial intermembrane segment spans residues 278 to 285; sequence CVMKFFPM.

The protein belongs to the mitochondrial carrier (TC 2.A.29) family.

It is found in the mitochondrion inner membrane. Its function is as follows. Mitochondrial solute carriers shuttle metabolites, nucleotides, and cofactors through the mitochondrial inner membrane. This chain is Mitochondrial substrate carrier family protein L (mcfL), found in Dictyostelium discoideum (Social amoeba).